The chain runs to 99 residues: Aspartyl/glutamyl-tRNA(Asn/Gln) amidotransferase subunit C (99 aa).

The protein belongs to the GatC family. As to quaternary structure, heterotrimer of A, B and C subunits.

It catalyses the reaction L-glutamyl-tRNA(Gln) + L-glutamine + ATP + H2O = L-glutaminyl-tRNA(Gln) + L-glutamate + ADP + phosphate + H(+). It carries out the reaction L-aspartyl-tRNA(Asn) + L-glutamine + ATP + H2O = L-asparaginyl-tRNA(Asn) + L-glutamate + ADP + phosphate + 2 H(+). Allows the formation of correctly charged Asn-tRNA(Asn) or Gln-tRNA(Gln) through the transamidation of misacylated Asp-tRNA(Asn) or Glu-tRNA(Gln) in organisms which lack either or both of asparaginyl-tRNA or glutaminyl-tRNA synthetases. The reaction takes place in the presence of glutamine and ATP through an activated phospho-Asp-tRNA(Asn) or phospho-Glu-tRNA(Gln). The sequence is that of Aspartyl/glutamyl-tRNA(Asn/Gln) amidotransferase subunit C from Mycobacterium leprae (strain Br4923).